The primary structure comprises 569 residues: Protein angel homolog 2 (569 aa).

Disordered regions lie at residues 1 to 22 (MRKGRHMPRHTNANYARPGVSP), 63 to 92 (LQHPSSSFSTVRHPFNRPPRPPDPYQWSSW), and 109 to 155 (GLME…WLRN). Residues 63-72 (LQHPSSSFST) show a composition bias toward polar residues. Residues 139–150 (PPKGSRSPKGSP) show a composition bias toward low complexity.

This sequence belongs to the CCR4/nocturin family.

The sequence is that of Protein angel homolog 2 (angel2) from Danio rerio (Zebrafish).